We begin with the raw amino-acid sequence, 115 residues long: Macrophage migration inhibitory factor homolog (115 aa).

The active-site Proton acceptor; via imino nitrogen is the Pro-2. Positions 33 and 65 each coordinate substrate.

Belongs to the MIF family.

The protein resides in the secreted. It catalyses the reaction L-dopachrome = 5,6-dihydroxyindole-2-carboxylate. The catalysed reaction is 3-phenylpyruvate = enol-phenylpyruvate. In terms of biological role, tautomerization of the methyl ester of L-dopachrome. Inhibits migration of human peripheral blood mononuclear cells. The polypeptide is Macrophage migration inhibitory factor homolog (Brugia malayi (Filarial nematode worm)).